Here is a 60-residue protein sequence, read N- to C-terminus: Large ribosomal subunit protein uL30 (60 aa).

It belongs to the universal ribosomal protein uL30 family. In terms of assembly, part of the 50S ribosomal subunit.

The chain is Large ribosomal subunit protein uL30 from Pseudoalteromonas translucida (strain TAC 125).